The chain runs to 182 residues: Mu-like prophage FluMu protein gp45 (182 aa).

Residues 159–182 (TDHQSSGISGKNHDHEERVGKPVP) form a disordered region. Residues 169–182 (KNHDHEERVGKPVP) show a composition bias toward basic and acidic residues.

This sequence to phage Mu protein gp45.

The chain is Mu-like prophage FluMu protein gp45 from Haemophilus influenzae (strain ATCC 51907 / DSM 11121 / KW20 / Rd).